Reading from the N-terminus, the 247-residue chain is Carboxy-S-adenosyl-L-methionine synthase (247 aa).

S-adenosyl-L-methionine is bound by residues Y40, 65–67, 90–91, 122–123, N137, and R204; these read GAS, DN, and DI.

The protein belongs to the class I-like SAM-binding methyltransferase superfamily. Cx-SAM synthase family. Homodimer.

It carries out the reaction prephenate + S-adenosyl-L-methionine = carboxy-S-adenosyl-L-methionine + 3-phenylpyruvate + H2O. Its function is as follows. Catalyzes the conversion of S-adenosyl-L-methionine (SAM) to carboxy-S-adenosyl-L-methionine (Cx-SAM). This chain is Carboxy-S-adenosyl-L-methionine synthase, found in Pseudomonas putida (strain W619).